The chain runs to 324 residues: tRNA-modifying protein YgfZ (324 aa).

Trp186 contacts folate.

The protein belongs to the tRNA-modifying YgfZ family.

It localises to the cytoplasm. Functionally, folate-binding protein involved in regulating the level of ATP-DnaA and in the modification of some tRNAs. It is probably a key factor in regulatory networks that act via tRNA modification, such as initiation of chromosomal replication. This chain is tRNA-modifying protein YgfZ, found in Colwellia psychrerythraea (strain 34H / ATCC BAA-681) (Vibrio psychroerythus).